Reading from the N-terminus, the 123-residue chain is Immunoglobulin lambda variable 5-39 (123 aa).

Positions 1-19 (MAWTPLLLLLLSHCTGSLS) are cleaved as a signal peptide. The segment at 20-44 (QPVLTQPTSLSASPGASARFTCTLR) is framework-1. In terms of domain architecture, Ig-like spans 21-123 (PVLTQPTSLS…YCAIWYSSTS (103 aa)). A disulfide bridge connects residues Cys41 and Cys115. Residues 45-53 (SGINVGTYR) are complementarity-determining-1. Positions 54-70 (IYWYQQKPGSLPRYLLR) are framework-2. The interval 71 to 77 (YKSDSDK) is complementarity-determining-2. The segment at 78–115 (QQGSGVPSRFSGSKDASTNAGLLLISGLQSEDEADYYC) is framework-3. Residues 116–123 (AIWYSSTS) form a complementarity-determining-3 region.

As to quaternary structure, immunoglobulins are composed of two identical heavy chains and two identical light chains; disulfide-linked.

Its subcellular location is the secreted. The protein resides in the cell membrane. V region of the variable domain of immunoglobulin light chains that participates in the antigen recognition. Immunoglobulins, also known as antibodies, are membrane-bound or secreted glycoproteins produced by B lymphocytes. In the recognition phase of humoral immunity, the membrane-bound immunoglobulins serve as receptors which, upon binding of a specific antigen, trigger the clonal expansion and differentiation of B lymphocytes into immunoglobulins-secreting plasma cells. Secreted immunoglobulins mediate the effector phase of humoral immunity, which results in the elimination of bound antigens. The antigen binding site is formed by the variable domain of one heavy chain, together with that of its associated light chain. Thus, each immunoglobulin has two antigen binding sites with remarkable affinity for a particular antigen. The variable domains are assembled by a process called V-(D)-J rearrangement and can then be subjected to somatic hypermutations which, after exposure to antigen and selection, allow affinity maturation for a particular antigen. The sequence is that of Immunoglobulin lambda variable 5-39 from Homo sapiens (Human).